Here is a 313-residue protein sequence, read N- to C-terminus: 4-diphosphocytidyl-2-C-methyl-D-erythritol kinase (313 aa).

The active site involves K27. Position 110–120 (110–120) interacts with ATP; the sequence is PIGGGVGGGSS. The active site involves D152.

Belongs to the GHMP kinase family. IspE subfamily.

The catalysed reaction is 4-CDP-2-C-methyl-D-erythritol + ATP = 4-CDP-2-C-methyl-D-erythritol 2-phosphate + ADP + H(+). It participates in isoprenoid biosynthesis; isopentenyl diphosphate biosynthesis via DXP pathway; isopentenyl diphosphate from 1-deoxy-D-xylulose 5-phosphate: step 3/6. Catalyzes the phosphorylation of the position 2 hydroxy group of 4-diphosphocytidyl-2C-methyl-D-erythritol. The protein is 4-diphosphocytidyl-2-C-methyl-D-erythritol kinase of Histophilus somni (strain 129Pt) (Haemophilus somnus).